We begin with the raw amino-acid sequence, 954 residues long: Kinesin-like protein KIN-14Q (954 aa).

Residues 33–155 form the Calponin-homology (CH) domain; that stretch reads AMRRYDAASW…CVLALKSFSE (123 aa). Residues 374–699 form the Kinesin motor domain; that stretch reads NIRVYCRVRP…LKFAERVASV (326 aa). 457–464 serves as a coordination point for ATP; that stretch reads GQTGSGKT. A coiled-coil region spans residues 704 to 733; sequence AKANKEGSEVRELKEQIATLKAALAKKEGE. The span at 844-855 shows a compositional bias: basic and acidic residues; sequence YDPDKQRRRAEP. Disordered regions lie at residues 844–876 and 912–954; these read YDPD…DQEM and PNLA…NTPK. Residues 864–873 show a composition bias toward low complexity; the sequence is FDAATSSPSD. Over residues 928 to 954 the composition is skewed to polar residues; the sequence is PIRNSKQLPFSTTGGRRTRNGKINTPK.

This sequence belongs to the TRAFAC class myosin-kinesin ATPase superfamily. Kinesin family. KIN-14 subfamily. In terms of assembly, forms oligomers in vitro. Interacts with actin microfilaments. Binds to actin in vitro through its calponin-homology (CH) domain. In terms of tissue distribution, expressed in primary leaf, primary root, developing flower and coleoptile.

It is found in the cytoplasm. The protein resides in the cytoskeleton. Its activity is regulated as follows. The microtubule-dependent ATPase activity is regulated by actin binding. In terms of biological role, minus end-directed motor protein that transports actin filaments along microtubules. Plays a central role in the polar orientation of actin filaments along microtubules, and thus a contribution to the organization of the cytoskeletal architecture. Links the actin microfilaments with the cortical microtubules in both cycling and non-cycling cells. Required for efficient cell elongation by its participation in the premitotic nuclear positioning. The protein is Kinesin-like protein KIN-14Q of Oryza sativa subsp. japonica (Rice).